The sequence spans 117 residues: Large ribosomal subunit protein uL22 (117 aa).

The protein belongs to the universal ribosomal protein uL22 family. As to quaternary structure, part of the 50S ribosomal subunit.

In terms of biological role, this protein binds specifically to 23S rRNA; its binding is stimulated by other ribosomal proteins, e.g. L4, L17, and L20. It is important during the early stages of 50S assembly. It makes multiple contacts with different domains of the 23S rRNA in the assembled 50S subunit and ribosome. Functionally, the globular domain of the protein is located near the polypeptide exit tunnel on the outside of the subunit, while an extended beta-hairpin is found that lines the wall of the exit tunnel in the center of the 70S ribosome. This Synechococcus elongatus (strain ATCC 33912 / PCC 7942 / FACHB-805) (Anacystis nidulans R2) protein is Large ribosomal subunit protein uL22.